We begin with the raw amino-acid sequence, 208 residues long: MPTVHVFARDHINTDEIIPARHLTTDVESELAKYAMEDYDKDFVRRVQPGDIIVAGADFGCGSSREHAVWALRGAGVSAVIAPNFARIYYRNSINNGFLALECEGITELFQDGEEAELDLKGGTIRNPRTGKELSFVPVPQFALDVQKAGGWLEYMKAGEDVEGERLDNASTSAGHGHAGTPLGDDPAKEDGPRPEQASGHQKEEHHA.

The segment at Glu163–Ala208 is disordered.

The protein belongs to the LeuD family. LeuD type 2 subfamily. As to quaternary structure, heterodimer of LeuC and LeuD.

It carries out the reaction (2R,3S)-3-isopropylmalate = (2S)-2-isopropylmalate. It participates in amino-acid biosynthesis; L-leucine biosynthesis; L-leucine from 3-methyl-2-oxobutanoate: step 2/4. In terms of biological role, catalyzes the isomerization between 2-isopropylmalate and 3-isopropylmalate, via the formation of 2-isopropylmaleate. In Deinococcus radiodurans (strain ATCC 13939 / DSM 20539 / JCM 16871 / CCUG 27074 / LMG 4051 / NBRC 15346 / NCIMB 9279 / VKM B-1422 / R1), this protein is 3-isopropylmalate dehydratase small subunit 2 (leuD2).